Reading from the N-terminus, the 141-residue chain is uncharacterized protein (141 aa).

Helical transmembrane passes span 41-61 (LIMLLVAICSSLSGNTVNYLF) and 95-115 (IIFLISFPFWGCFVSLFSGFF).

Its subcellular location is the cell membrane. This is an uncharacterized protein from Rickettsia prowazekii (strain Madrid E).